We begin with the raw amino-acid sequence, 226 residues long: 7-cyano-7-deazaguanine synthase (226 aa).

Residue 8 to 18 (ISGGLDSTTCL) coordinates ATP. Zn(2+) contacts are provided by cysteine 188, cysteine 198, cysteine 201, and cysteine 204.

Belongs to the QueC family. The cofactor is Zn(2+).

It catalyses the reaction 7-carboxy-7-deazaguanine + NH4(+) + ATP = 7-cyano-7-deazaguanine + ADP + phosphate + H2O + H(+). It functions in the pathway purine metabolism; 7-cyano-7-deazaguanine biosynthesis. In terms of biological role, catalyzes the ATP-dependent conversion of 7-carboxy-7-deazaguanine (CDG) to 7-cyano-7-deazaguanine (preQ(0)). The protein is 7-cyano-7-deazaguanine synthase of Coxiella burnetii (strain Dugway 5J108-111).